Reading from the N-terminus, the 469-residue chain is Tubulin gamma-1 chain (469 aa).

Residue 142 to 148 (AGGTGSG) coordinates GTP.

This sequence belongs to the tubulin family.

The protein localises to the cytoplasm. It is found in the cytoskeleton. It localises to the microtubule organizing center. Its function is as follows. Tubulin is the major constituent of microtubules. The gamma chain is found at microtubule organizing centers (MTOC) such as the spindle poles, suggesting that it is involved in the minus-end nucleation of microtubule assembly. This chain is Tubulin gamma-1 chain (TUBG1), found in Zea mays (Maize).